Consider the following 535-residue polypeptide: Alpha-1,3-mannosyl-glycoprotein 4-beta-N-acetylglucosaminyltransferase A (535 aa).

The Cytoplasmic segment spans residues 1–6 (MRLRNG). The helical; Signal-anchor for type II membrane protein transmembrane segment at 7 to 27 (TVATVLVFITTFLSLSWYTAW) threads the bilayer. Residues 28-54 (QNGKEKLIAYQREFHALKERLRIAEHR) are a coiled coil. Residues 28–535 (QNGKEKLIAY…NEIHIKKMTN (508 aa)) lie on the Lumenal side of the membrane. Residues N77, N85, and N458 are each glycosylated (N-linked (GlcNAc...) asparagine).

It belongs to the glycosyltransferase 54 family. Requires a divalent metal cation as cofactor. N-glycosylated.

The protein localises to the golgi apparatus membrane. Its subcellular location is the secreted. The catalysed reaction is N(4)-{beta-D-GlcNAc-(1-&gt;2)-alpha-D-Man-(1-&gt;3)-[beta-D-GlcNAc-(1-&gt;2)-alpha-D-Man-(1-&gt;6)]-beta-D-Man-(1-&gt;4)-beta-D-GlcNAc-(1-&gt;4)-beta-D-GlcNAc}-L-asparaginyl-[protein] + UDP-N-acetyl-alpha-D-glucosamine = N(4)-{beta-D-GlcNAc-(1-&gt;2)-[beta-D-GlcNAc-(1-&gt;4)]-alpha-D-Man-(1-&gt;3)-[beta-D-GlcNAc-(1-&gt;2)-alpha-D-Man-(1-&gt;6)]-beta-D-Man-(1-&gt;4)-beta-D-GlcNAc-(1-&gt;4)-beta-D-GlcNAc}-L-asparaginyl-[protein] + UDP + H(+). It catalyses the reaction an N(4)-{beta-D-GlcNAc-(1-&gt;2)-alpha-D-Man-(1-&gt;3)-[alpha-D-Man-(1-&gt;6)]-beta-D-Man-(1-&gt;4)-beta-D-GlcNAc-(1-&gt;4)-beta-D-GlcNAc}-L-asparaginyl-[protein] + UDP-N-acetyl-alpha-D-glucosamine = an N(4)-{beta-D-GlcNAc-(1-&gt;2)-[beta-D-GlcNAc-(1-&gt;4)]-alpha-D-Man-(1-&gt;3)-[alpha-D-Man-(1-&gt;6)]-beta-D-Man-(1-&gt;4)-beta-D-GlcNAc-(1-&gt;4)-beta-D-GlcNAc}-L-asparaginyl-[protein] + UDP + H(+). The enzyme catalyses an N(4)-{beta-D-GlcNAc-(1-&gt;2)-alpha-D-Man-(1-&gt;3)-[beta-D-GlcNAc-(1-&gt;2)-[beta-D-GlcNAc-(1-&gt;6)]-alpha-D-Man-(1-&gt;6)]-beta-D-Man-(1-&gt;4)-beta-D-GlcNAc-(1-&gt;4)-beta-D-GlcNAc}-L-asparaginyl-[protein] + UDP-N-acetyl-alpha-D-glucosamine = an N(4)-{beta-D-GlcNAc-(1-&gt;2)-[beta-D-GlcNAc-(1-&gt;4)]-alpha-D-Man-(1-&gt;3)-[beta-D-GlcNAc-(1-&gt;2)-[beta-D-GlcNAc-(1-&gt;6)]-alpha-D-Man-(1-&gt;6)]-beta-D-Man-(1-&gt;4)-beta-D-GlcNAc-(1-&gt;4)-beta-D-GlcNAc}-L-asparaginyl-[protein] + UDP + H(+). It carries out the reaction an N(4)-{beta-D-GlcNAc-(1-&gt;2)-alpha-D-Man-(1-&gt;3)-[beta-D-GlcNAc-(1-&gt;2)-alpha-D-Man-(1-&gt;6)]-beta-D-Man-(1-&gt;4)-beta-D-GlcNAc-(1-&gt;4)-[alpha-L-Fuc-(1-&gt;6)]-beta-D-GlcNAc}-L-asparaginyl-[protein] + UDP-N-acetyl-alpha-D-glucosamine = N(4)-{beta-D-GlcNAc-(1-&gt;2)-[beta-D-GlcNAc-(1-&gt;4)]-alpha-D-Man-(1-&gt;3)-[beta-D-GlcNAc-(1-&gt;2)-alpha-D-Man-(1-&gt;6)]-beta-D-Man-(1-&gt;4)-beta-D-GlcNAc-(1-&gt;4)-[alpha-L-Fuc-(1-&gt;6)]-beta-D-GlcNAc}-asparaginyl-[protein] + UDP + H(+). The catalysed reaction is an N(4)-{beta-D-GlcNAc-(1-&gt;2)-alpha-D-Man-(1-&gt;3)-[beta-D-Gal-(1-&gt;4)-beta-D-GlcNAc-(1-&gt;2)-alpha-D-Man-(1-&gt;6)]-beta-D-Man-(1-&gt;4)-beta-D-GlcNAc-(1-&gt;4)-beta-D-GlcNAc}-L-asparaginyl-[protein] + UDP-N-acetyl-alpha-D-glucosamine = an N(4)-{beta-D-GlcNAc-(1-&gt;2)-[beta-D-GlcNAc-(1-&gt;4)]-alpha-D-Man-(1-&gt;3)-[beta-D-Gal-(1-&gt;4)-beta-D-GlcNAc-(1-&gt;2)-alpha-D-Man-(1-&gt;6)]-beta-D-Man-(1-&gt;4)-beta-D-GlcNAc-(1-&gt;4)-beta-D-GlcNAc}-L-asparaginyl-[protein] + UDP + H(+). It catalyses the reaction N(4)-{beta-D-GlcNAc-(1-&gt;2)-alpha-D-Man-(1-&gt;3)-[alpha-D-Man-(1-&gt;3)-{alpha-D-Man-(1-&gt;6)}-alpha-D-Man-(1-&gt;6)]-beta-D-Man-(1-&gt;4)-beta-D-GlcNAc-(1-&gt;4)-beta-D-GlcNAc}-asparaginyl-[protein] + UDP-N-acetyl-alpha-D-glucosamine = N(4)-{beta-D-GlcNAc-(1-&gt;2)-[beta-D-GlcNAc-(1-&gt;4)]-alpha-D-Man-(1-&gt;3)-[alpha-D-Man-(1-&gt;3)-{alpha-D-Man-(1-&gt;6)}-alpha-D-Man-(1-&gt;6)]-beta-D-Man-(1-&gt;4)-beta-D-GlcNAc-(1-&gt;4)-beta-D-GlcNAc}-asparaginyl-[protein] + UDP + H(+). The enzyme catalyses N(4)-{beta-D-GlcNAc-(1-&gt;2)-alpha-D-Man-(1-&gt;3)-beta-D-Man-(1-&gt;4)-beta-D-GlcNAc-(1-&gt;4)-beta-D-GlcNAc}-asparaginyl-[protein] + UDP-N-acetyl-alpha-D-glucosamine = N(4)-{beta-D-GlcNAc-(1-&gt;2)-[beta-D-GlcNAc-(1-&gt;4)]-alpha-D-Man-(1-&gt;3)-beta-D-Man-(1-&gt;4)-beta-D-GlcNAc-(1-&gt;4)-beta-D-GlcNAc}-asparaginyl-[protein] + UDP + H(+). The protein operates within protein modification; protein glycosylation. With respect to regulation, inhibited by UDP. Functionally, glycosyltransferase that catalyze the transfer of GlcNAc from UDP-GlcNAc to the GlcNAcbeta1-2Manalpha1-3 arm of the core structure of N-linked glycans through a beta1-4 linkage and participates in the production of tri- and tetra-antennary N-linked sugar chains. Involved in glucose transport by mediating SLC2A2/GLUT2 glycosylation, thereby controlling cell-surface expression of SLC2A2 in pancreatic beta cells. The chain is Alpha-1,3-mannosyl-glycoprotein 4-beta-N-acetylglucosaminyltransferase A from Gallus gallus (Chicken).